We begin with the raw amino-acid sequence, 142 residues long: Large ribosomal subunit protein uL13 (142 aa).

The protein belongs to the universal ribosomal protein uL13 family. As to quaternary structure, part of the 50S ribosomal subunit.

In terms of biological role, this protein is one of the early assembly proteins of the 50S ribosomal subunit, although it is not seen to bind rRNA by itself. It is important during the early stages of 50S assembly. This is Large ribosomal subunit protein uL13 from Coxiella burnetii (strain CbuG_Q212) (Coxiella burnetii (strain Q212)).